The sequence spans 158 residues: MISINMTIENAEWGDEKILYTITEKALIATIDRLSLTQVTSELSLLFTNNMRMAQINTQWRNKNKPTNVLSFPAFPLKAGQNPGPMLGDIVLARETIVYEAEEEGKSFHDHLTHMIVHGILHLLGYDHETDDEAYQMEELEKEILQKIAIKNPYTELL.

Zn(2+)-binding residues include histidine 118, histidine 122, and histidine 128.

It belongs to the endoribonuclease YbeY family. The cofactor is Zn(2+).

It localises to the cytoplasm. In terms of biological role, single strand-specific metallo-endoribonuclease involved in late-stage 70S ribosome quality control and in maturation of the 3' terminus of the 16S rRNA. The polypeptide is Endoribonuclease YbeY (Bartonella bacilliformis (strain ATCC 35685 / KC583 / Herrer 020/F12,63)).